The primary structure comprises 1420 residues: DNA-directed RNA polymerase subunit beta' (1420 aa).

Zn(2+)-binding residues include cysteine 72, cysteine 74, cysteine 87, and cysteine 90. Aspartate 462, aspartate 464, and aspartate 466 together coordinate Mg(2+). Zn(2+)-binding residues include cysteine 816, cysteine 896, cysteine 903, and cysteine 906.

Belongs to the RNA polymerase beta' chain family. In terms of assembly, the RNAP catalytic core consists of 2 alpha, 1 beta, 1 beta' and 1 omega subunit. When a sigma factor is associated with the core the holoenzyme is formed, which can initiate transcription. Mg(2+) is required as a cofactor. Requires Zn(2+) as cofactor.

It carries out the reaction RNA(n) + a ribonucleoside 5'-triphosphate = RNA(n+1) + diphosphate. Its function is as follows. DNA-dependent RNA polymerase catalyzes the transcription of DNA into RNA using the four ribonucleoside triphosphates as substrates. The polypeptide is DNA-directed RNA polymerase subunit beta' (Blochmanniella floridana).